We begin with the raw amino-acid sequence, 493 residues long: Guanosine-5'-triphosphate,3'-diphosphate pyrophosphatase (493 aa).

It belongs to the GppA/Ppx family. GppA subfamily.

It carries out the reaction guanosine 3'-diphosphate 5'-triphosphate + H2O = guanosine 3',5'-bis(diphosphate) + phosphate + H(+). It functions in the pathway purine metabolism; ppGpp biosynthesis; ppGpp from GTP: step 2/2. In terms of biological role, catalyzes the conversion of pppGpp to ppGpp. Guanosine pentaphosphate (pppGpp) is a cytoplasmic signaling molecule which together with ppGpp controls the 'stringent response', an adaptive process that allows bacteria to respond to amino acid starvation, resulting in the coordinated regulation of numerous cellular activities. The polypeptide is Guanosine-5'-triphosphate,3'-diphosphate pyrophosphatase (Salmonella agona (strain SL483)).